Consider the following 441-residue polypeptide: Glutamate--tRNA ligase 2 (441 aa).

The short motif at 8-18 (PSPTGYIHVGN) is the 'HIGH' region element. The 'KMSKS' region signature appears at 239–243 (ALSKR). Lysine 242 lines the ATP pocket.

This sequence belongs to the class-I aminoacyl-tRNA synthetase family. Glutamate--tRNA ligase type 1 subfamily. In terms of assembly, monomer.

It localises to the cytoplasm. It catalyses the reaction tRNA(Glu) + L-glutamate + ATP = L-glutamyl-tRNA(Glu) + AMP + diphosphate. Its function is as follows. Catalyzes the attachment of glutamate to tRNA(Glu) in a two-step reaction: glutamate is first activated by ATP to form Glu-AMP and then transferred to the acceptor end of tRNA(Glu). This is Glutamate--tRNA ligase 2 from Ruegeria sp. (strain TM1040) (Silicibacter sp.).